We begin with the raw amino-acid sequence, 110 residues long: uncharacterized protein (110 aa).

Belongs to the RuBisCO large chain family.

It localises to the mitochondrion. This is an uncharacterized protein from Arabidopsis thaliana (Mouse-ear cress).